A 391-amino-acid chain; its full sequence is Serpin B13 (391 aa).

The protein belongs to the serpin family. Ov-serpin subfamily. As to expression, skin specific.

It is found in the cytoplasm. May play a role in the proliferation or differentiation of keratinocytes. This chain is Serpin B13 (SERPINB13), found in Homo sapiens (Human).